Reading from the N-terminus, the 263-residue chain is Indole-3-glycerol phosphate synthase (263 aa).

The protein belongs to the TrpC family.

The catalysed reaction is 1-(2-carboxyphenylamino)-1-deoxy-D-ribulose 5-phosphate + H(+) = (1S,2R)-1-C-(indol-3-yl)glycerol 3-phosphate + CO2 + H2O. The protein operates within amino-acid biosynthesis; L-tryptophan biosynthesis; L-tryptophan from chorismate: step 4/5. This chain is Indole-3-glycerol phosphate synthase, found in Laribacter hongkongensis (strain HLHK9).